Reading from the N-terminus, the 98-residue chain is Post-transcriptional regulator ComN (98 aa).

As to quaternary structure, interacts directly with DivIVA.

Its subcellular location is the cytoplasm. Its function is as follows. Required for post-transcription initiation control of the comE operon. Promotes the accumulation of its target comE mRNA to septal and polar sites. In Bacillus subtilis (strain 168), this protein is Post-transcriptional regulator ComN (comN).